The sequence spans 117 residues: Protein Rev (117 aa).

S5 and S8 each carry phosphoserine; by host CK2. The segment at 18-26 is homomultimerization; the sequence is LIKILYQSN. Positions 24 to 49 are disordered; it reads QSNPPPNTEGTTRQARRNRRRRWRAR. Positions 35–51 match the Nuclear localization signal and RNA-binding (RRE) motif; the sequence is TRQARRNRRRRWRARQR. The segment covering 37-49 has biased composition (basic residues); the sequence is QARRNRRRRWRAR. The short motif at 74-85 is the Nuclear export signal and binding to XPO1 element; that stretch reads LQLPPLERLTLN. Phosphoserine; by host is present on residues S93 and S100. Positions 93–105 are enriched in polar residues; sequence SGTQGVGSPQISV. The tract at residues 93 to 117 is disordered; sequence SGTQGVGSPQISVESPAILGSGTEE.

The protein belongs to the HIV-1 REV protein family. Homomultimer; when bound to the RRE. Multimeric assembly is essential for activity and may involve XPO1. Binds to human KPNB1, XPO1, TNPO1, RANBP5 and IPO7. Interacts with the viral Integrase. Interacts with human KHDRBS1. Interacts with human NAP1; this interaction decreases Rev multimerization and stimulates its activity. Interacts with human DEAD-box helicases DDX3 and DDX24; these interactions may serve for viral RNA export to the cytoplasm and packaging, respectively. Interacts with human PSIP1; this interaction may inhibit HIV-1 DNA integration by promoting dissociation of the Integrase-LEDGF/p75 complex. Post-translationally, asymmetrically arginine dimethylated at one site by host PRMT6. Methylation impairs the RNA-binding activity and export of viral RNA from the nucleus to the cytoplasm. In terms of processing, phosphorylated by protein kinase CK2. Presence of, and maybe binding to the N-terminus of the regulatory beta subunit of CK2 is necessary for CK2-mediated Rev's phosphorylation.

The protein resides in the host nucleus. It is found in the host nucleolus. Its subcellular location is the host cytoplasm. Functionally, escorts unspliced or incompletely spliced viral pre-mRNAs (late transcripts) out of the nucleus of infected cells. These pre-mRNAs carry a recognition sequence called Rev responsive element (RRE) located in the env gene, that is not present in fully spliced viral mRNAs (early transcripts). This function is essential since most viral proteins are translated from unspliced or partially spliced pre-mRNAs which cannot exit the nucleus by the pathway used by fully processed cellular mRNAs. Rev itself is translated from a fully spliced mRNA that readily exits the nucleus. Rev's nuclear localization signal (NLS) binds directly to KPNB1/Importin beta-1 without previous binding to KPNA1/Importin alpha-1. KPNB1 binds to the GDP bound form of RAN (Ran-GDP) and targets Rev to the nucleus. In the nucleus, the conversion from Ran-GDP to Ran-GTP dissociates Rev from KPNB1 and allows Rev's binding to the RRE in viral pre-mRNAs. Rev multimerization on the RRE via cooperative assembly exposes its nuclear export signal (NES) to the surface. Rev can then form a complex with XPO1/CRM1 and Ran-GTP, leading to nuclear export of the complex. Conversion from Ran-GTP to Ran-GDP mediates dissociation of the Rev/RRE/XPO1/RAN complex, so that Rev can return to the nucleus for a subsequent round of export. Beside KPNB1, also seems to interact with TNPO1/Transportin-1, RANBP5/IPO5 and IPO7/RANBP7 for nuclear import. The nucleoporin-like HRB/RIP is an essential cofactor that probably indirectly interacts with Rev to release HIV RNAs from the perinuclear region to the cytoplasm. This Human immunodeficiency virus type 1 group M subtype A (isolate MAL) (HIV-1) protein is Protein Rev.